A 2334-amino-acid polypeptide reads, in one-letter code: Centriolin (2334 aa).

The interval Met1–Gln70 is disordered. Positions Pro21–Leu38 are enriched in low complexity. LRR repeat units follow at residues Lys126–Leu147, Arg148–Cys169, Asn170–Lys191, and Ser194–Lys215. In terms of domain architecture, LRRCT spans Asn228–Arg266. Coiled-coil stretches lie at residues Glu265–Thr343 and Asp437–Val800. Disordered stretches follow at residues Asp542–Glu562 and Ser751–Glu771. Phosphoserine is present on Ser832. Residues Glu858–Leu1102 adopt a coiled-coil conformation. Disordered stretches follow at residues Ser1154–Ala1198, Lys1213–Pro1245, and Leu1338–Asp1360. The segment covering Ser1227–Glu1238 has biased composition (acidic residues). The stretch at Glu1320–Asp2169 forms a coiled coil. Ser1478 is subject to Phosphoserine. The segment at Met1951 to Arg2121 is required for centrosome localization. Positions Gln1988–His2334 are sufficient for interaction with HOOK2. The span at Thr2291–Val2307 shows a compositional bias: low complexity. The interval Thr2291–His2334 is disordered.

Interacts with HOOK2. Interacts with EXOC6 and SNAPIN. Associates with the exocyst complex. In terms of tissue distribution, highly expressed in liver.

It is found in the cytoplasm. It localises to the cytoskeleton. Its subcellular location is the microtubule organizing center. The protein resides in the centrosome. The protein localises to the midbody. It is found in the midbody ring. Its function is as follows. Involved in cell cycle progression and cytokinesis. During the late steps of cytokinesis, anchors exocyst and SNARE complexes at the midbody, thereby allowing secretory vesicle-mediated abscission. The polypeptide is Centriolin (Cntrl) (Mus musculus (Mouse)).